Here is a 170-residue protein sequence, read N- to C-terminus: MAARFARGFVNRNPRNNELMGRQAPNTGYQFEKDRAARSYIYKVELVEGKSHREGRLVHYQDGVVISASTKEPSIASQLYSKTDTSAALNIGRVLALRCLQSGIHFAMPGATKEAIEKSQHQTHFFKALEEEGLTLKEPAHVEHSYETDKTFTWKRYPQKPTRQDKLDEL.

It belongs to the universal ribosomal protein uL18 family. As to quaternary structure, component of the mitochondrial ribosome large subunit (39S) which comprises a 16S rRNA and about 50 distinct proteins.

Its subcellular location is the mitochondrion. In Caenorhabditis elegans, this protein is Large ribosomal subunit protein uL18m (mrpl-18).